The following is a 108-amino-acid chain: uncharacterized protein (108 aa).

Residues 1–10 (MDMLHNKCSD) show a composition bias toward basic and acidic residues. A disordered region spans residues 1 to 27 (MDMLHNKCSDAIKSTSNSNLSNEVDKQ). The segment covering 12–22 (IKSTSNSNLSN) has biased composition (polar residues).

This is an uncharacterized protein from Saccharomyces cerevisiae (strain ATCC 204508 / S288c) (Baker's yeast).